Here is a 37-residue protein sequence, read N- to C-terminus: Esculentin-2Ra (37 aa).

Cys-31 and Cys-37 are oxidised to a cystine.

Expressed by the skin glands.

Its subcellular location is the secreted. Its function is as follows. Antimicrobial peptide. The sequence is that of Esculentin-2Ra from Pelophylax ridibundus (Marsh frog).